The following is a 445-amino-acid chain: GTPase Der (445 aa).

2 EngA-type G domains span residues 3-167 (PVIA…YADQ) and 180-353 (IKIA…AAAM). Residues 9–16 (GRPNVGKS), 56–60 (DTGGF), 119–122 (NKAE), 186–193 (GRPNVGKS), 233–237 (DTAGL), and 298–301 (NKWD) each bind GTP. The 85-residue stretch at 354–438 (AKLPTPKLTR…PLRIEFRSST (85 aa)) folds into the KH-like domain.

It belongs to the TRAFAC class TrmE-Era-EngA-EngB-Septin-like GTPase superfamily. EngA (Der) GTPase family. Associates with the 50S ribosomal subunit.

Functionally, GTPase that plays an essential role in the late steps of ribosome biogenesis. This is GTPase Der from Burkholderia multivorans (strain ATCC 17616 / 249).